The following is a 325-amino-acid chain: Metacaspase-9 (325 aa).

Catalysis depends on residues histidine 95 and cysteine 147. Cysteine 147 carries the post-translational modification S-nitrosocysteine. The N-linked (GlcNAc...) asparagine glycan is linked to asparagine 177.

This sequence belongs to the peptidase C14B family. Post-translationally, the two subunits are derived from the precursor sequence by an autocatalytic mechanism. In terms of processing, S-nitrosylation at Cys-147 suppresses both autoprocessing and proteolytic activity of the full-length protein, but does not affect the activity of the mature processed form. As to expression, expressed in root tips, cauline leaves, flowers and siliques.

The protein resides in the secreted. The protein localises to the extracellular space. Its subcellular location is the apoplast. Its activity is regulated as follows. Inhibited by serpin ZX and nitric oxide through cysteine nitrosylation. In terms of biological role, cysteine protease that cleaves specifically after arginine or lysine residues. Does not cleave caspase-specific substrates. Required for proteolytic processing of GRI. The protein is Metacaspase-9 (AMC9) of Arabidopsis thaliana (Mouse-ear cress).